A 99-amino-acid chain; its full sequence is YcgL domain-containing protein HD_1373 (99 aa).

The 85-residue stretch at 8-92 (NFCAIYKSMS…PAENLLKQFL (85 aa)) folds into the YcgL domain.

The polypeptide is YcgL domain-containing protein HD_1373 (Haemophilus ducreyi (strain 35000HP / ATCC 700724)).